The chain runs to 792 residues: Phenylalanine--tRNA ligase beta subunit (792 aa).

Residues 39–150 enclose the tRNA-binding domain; it reads GDEITNVVTG…ENTPIGKDIK (112 aa). Residues 404–479 enclose the B5 domain; the sequence is SEPNIVEVDY…RIYGYNKVPS (76 aa). Positions 457, 463, 466, and 467 each coordinate Mg(2+). Positions 699–792 constitute an FDX-ACB domain; the sequence is PKFPTVTRDI…LEHVLGAELR (94 aa).

This sequence belongs to the phenylalanyl-tRNA synthetase beta subunit family. Type 1 subfamily. In terms of assembly, tetramer of two alpha and two beta subunits. Mg(2+) is required as a cofactor.

It is found in the cytoplasm. It carries out the reaction tRNA(Phe) + L-phenylalanine + ATP = L-phenylalanyl-tRNA(Phe) + AMP + diphosphate + H(+). The protein is Phenylalanine--tRNA ligase beta subunit of Clostridium acetobutylicum (strain ATCC 824 / DSM 792 / JCM 1419 / IAM 19013 / LMG 5710 / NBRC 13948 / NRRL B-527 / VKM B-1787 / 2291 / W).